Reading from the N-terminus, the 232-residue chain is Putative N-acetylmannosamine-6-phosphate 2-epimerase (232 aa).

It belongs to the NanE family.

The catalysed reaction is an N-acyl-D-glucosamine 6-phosphate = an N-acyl-D-mannosamine 6-phosphate. Its pathway is amino-sugar metabolism; N-acetylneuraminate degradation; D-fructose 6-phosphate from N-acetylneuraminate: step 3/5. Converts N-acetylmannosamine-6-phosphate (ManNAc-6-P) to N-acetylglucosamine-6-phosphate (GlcNAc-6-P). In Proteus mirabilis (strain HI4320), this protein is Putative N-acetylmannosamine-6-phosphate 2-epimerase.